The primary structure comprises 471 residues: Microtubule-associated tyrosine carboxypeptidase 1 (471 aa).

Disordered regions lie at residues 1 to 40 (MVLD…PLYP) and 76 to 116 (HMRR…LRPA). H280 serves as a coordination point for Zn(2+). E281 functions as the Nucleophile in the catalytic mechanism. Zn(2+) contacts are provided by H285 and E316.

It belongs to the peptidase MATCAP family. Requires Zn(2+) as cofactor.

It is found in the cytoplasm. The protein resides in the cytoskeleton. The enzyme catalyses C-terminal L-alpha-aminoacyl-L-glutamyl-L-glutamyl-L-tyrosyl-[tubulin] + H2O = C-terminal L-alpha-aminoacyl-L-glutamyl-L-glutamyl-[tubulin] + L-tyrosine. It catalyses the reaction C-terminal L-alpha-aminoacyl-L-glutamyl-L-glutamyl-L-phenylalanyl-[tubulin] + H2O = C-terminal L-alpha-aminoacyl-L-glutamyl-L-glutamyl-[tubulin] + L-phenylalanine. In terms of biological role, tyrosine carboxypeptidase that removes the C-terminal tyrosine residue of alpha-tubulin, thereby regulating microtubule dynamics and function. Also able to remove the C-terminal phenylalanine residue of alpha-tubulin TUBA8. Recognizes adjacent tubulin dimers along the same protofilament. The protein is Microtubule-associated tyrosine carboxypeptidase 1 of Homo sapiens (Human).